The following is a 108-amino-acid chain: U3-lycotoxin-Ls1w (108 aa).

Positions 1 to 20 (MKFVLLFGVLLVTLFSYSSA) are cleaved as a signal peptide. Residues 21 to 44 (EMLDDFDQADEDELLSLIEKEEAR) constitute a propeptide that is removed on maturation. 4 disulfides stabilise this stretch: Cys48–Cys63, Cys55–Cys72, Cys62–Cys87, and Cys74–Cys85.

Belongs to the neurotoxin 19 (CSTX) family. 01 subfamily. In terms of tissue distribution, expressed by the venom gland.

It localises to the secreted. The sequence is that of U3-lycotoxin-Ls1w from Lycosa singoriensis (Wolf spider).